Reading from the N-terminus, the 40-residue chain is Dolichyl-diphosphooligosaccharide--protein glycosyltransferase subunit 4 (40 aa).

Residues 1–4 (MITD) are Lumenal-facing. A helical membrane pass occupies residues 5–25 (VQLAIFSNVLGVFLFLLVVAY). At 26–40 (HYINANTGKPIPKAK) the chain is on the cytoplasmic side.

The protein belongs to the OST4 family. Component of the oligosaccharyltransferase (OST) complex.

It is found in the endoplasmic reticulum membrane. Functionally, subunit of the oligosaccharyl transferase (OST) complex that catalyzes the initial transfer of a defined glycan (Glc(3)Man(9)GlcNAc(2) in eukaryotes) from the lipid carrier dolichol-pyrophosphate to an asparagine residue within an Asn-X-Ser/Thr consensus motif in nascent polypeptide chains, the first step in protein N-glycosylation. N-glycosylation occurs cotranslationally and the complex associates with the Sec61 complex at the channel-forming translocon complex that mediates protein translocation across the endoplasmic reticulum (ER). All subunits are required for a maximal enzyme activity. The chain is Dolichyl-diphosphooligosaccharide--protein glycosyltransferase subunit 4 from Drosophila ananassae (Fruit fly).